The following is an 80-amino-acid chain: Exodeoxyribonuclease 7 small subunit (80 aa).

Belongs to the XseB family. Heterooligomer composed of large and small subunits.

The protein resides in the cytoplasm. The enzyme catalyses Exonucleolytic cleavage in either 5'- to 3'- or 3'- to 5'-direction to yield nucleoside 5'-phosphates.. Its function is as follows. Bidirectionally degrades single-stranded DNA into large acid-insoluble oligonucleotides, which are then degraded further into small acid-soluble oligonucleotides. The sequence is that of Exodeoxyribonuclease 7 small subunit from Lactobacillus helveticus (strain DPC 4571).